The primary structure comprises 327 residues: Transaldolase (327 aa).

The active-site Schiff-base intermediate with substrate is the Lys-132.

This sequence belongs to the transaldolase family. Type 1 subfamily.

The protein localises to the cytoplasm. The catalysed reaction is D-sedoheptulose 7-phosphate + D-glyceraldehyde 3-phosphate = D-erythrose 4-phosphate + beta-D-fructose 6-phosphate. It functions in the pathway carbohydrate degradation; pentose phosphate pathway; D-glyceraldehyde 3-phosphate and beta-D-fructose 6-phosphate from D-ribose 5-phosphate and D-xylulose 5-phosphate (non-oxidative stage): step 2/3. Transaldolase is important for the balance of metabolites in the pentose-phosphate pathway. The chain is Transaldolase from Chlamydia muridarum (strain MoPn / Nigg).